Consider the following 184-residue polypeptide: uncharacterized protein (184 aa).

The N-terminal stretch at 1–20 (MTLRKILALTCLLLPMMASA) is a signal peptide.

This sequence to H.influenzae HI_0045.

The protein localises to the periplasm. This is an uncharacterized protein from Escherichia coli (strain K12).